The following is a 400-amino-acid chain: Argininosuccinate synthase (400 aa).

An ATP-binding site is contributed by 8-16 (AYSGGLDTS). An L-citrulline-binding site is contributed by tyrosine 87. Residue glycine 117 participates in ATP binding. L-aspartate contacts are provided by threonine 119, asparagine 123, and aspartate 124. Asparagine 123 provides a ligand contact to L-citrulline. L-citrulline contacts are provided by arginine 127, serine 175, glutamate 260, and tyrosine 272.

It belongs to the argininosuccinate synthase family. Type 1 subfamily. Homotetramer.

Its subcellular location is the cytoplasm. The enzyme catalyses L-citrulline + L-aspartate + ATP = 2-(N(omega)-L-arginino)succinate + AMP + diphosphate + H(+). The protein operates within amino-acid biosynthesis; L-arginine biosynthesis; L-arginine from L-ornithine and carbamoyl phosphate: step 2/3. This Mycobacterium sp. (strain JLS) protein is Argininosuccinate synthase.